The sequence spans 132 residues: Small ribosomal subunit protein uS8 (132 aa).

It belongs to the universal ribosomal protein uS8 family. As to quaternary structure, part of the 30S ribosomal subunit. Contacts proteins S5 and S12.

Its function is as follows. One of the primary rRNA binding proteins, it binds directly to 16S rRNA central domain where it helps coordinate assembly of the platform of the 30S subunit. The protein is Small ribosomal subunit protein uS8 of Thermoanaerobacter pseudethanolicus (strain ATCC 33223 / 39E) (Clostridium thermohydrosulfuricum).